The primary structure comprises 255 residues: GTP cyclohydrolase FolE2 (255 aa).

Belongs to the GTP cyclohydrolase IV family.

It carries out the reaction GTP + H2O = 7,8-dihydroneopterin 3'-triphosphate + formate + H(+). Its pathway is cofactor biosynthesis; 7,8-dihydroneopterin triphosphate biosynthesis; 7,8-dihydroneopterin triphosphate from GTP: step 1/1. In terms of biological role, converts GTP to 7,8-dihydroneopterin triphosphate. The protein is GTP cyclohydrolase FolE2 of Syntrophus aciditrophicus (strain SB).